The following is a 133-amino-acid chain: Oocytes ribonuclease (133 aa).

Positions 1–22 are cleaved as a signal peptide; it reads MCAKSLLLVFGILLGLSHLSLS. At glutamine 23 the chain carries Pyrrolidone carboxylic acid. Catalysis depends on histidine 32, which acts as the Proton acceptor. Cystine bridges form between cysteine 41-cysteine 93, cysteine 56-cysteine 103, cysteine 74-cysteine 118, and cysteine 115-cysteine 132. 57-61 serves as a coordination point for substrate; sequence KRVNT. Catalysis depends on histidine 125, which acts as the Proton donor.

The protein belongs to the pancreatic ribonuclease family. As to quaternary structure, monomer.

Its subcellular location is the secreted. Preferentially cleaves single-stranded RNA at pyrimidine residues with a 3'flanking guanine. Hydrolyzes poly(U) and poly(C) as substrates, and prefers the former. The S-lectins in frog eggs may be involved in the fertilization and development of the frog embryo. This lectin agglutinates various animal cells, including normal lymphocytes, erythrocytes, and fibroblasts of animal and human origin. It is cytotoxic against several tumor cells. This chain is Oocytes ribonuclease (RCR), found in Aquarana catesbeiana (American bullfrog).